The primary structure comprises 842 residues: Elongation factor 2 (842 aa).

Residues 17–346 (TNVRNMSVIA…MIVMHLPSPV (330 aa)) enclose the tr-type G domain. GTP-binding positions include 26–33 (AHVDHGKS), 158–161 (NKVD), and 213–215 (SGL). Histidine 699 is subject to Diphthamide.

It belongs to the TRAFAC class translation factor GTPase superfamily. Classic translation factor GTPase family. EF-G/EF-2 subfamily.

The protein resides in the cytoplasm. The catalysed reaction is GTP + H2O = GDP + phosphate + H(+). Its function is as follows. Catalyzes the GTP-dependent ribosomal translocation step during translation elongation. During this step, the ribosome changes from the pre-translocational (PRE) to the post-translocational (POST) state as the newly formed A-site-bound peptidyl-tRNA and P-site-bound deacylated tRNA move to the P and E sites, respectively. Catalyzes the coordinated movement of the two tRNA molecules, the mRNA and conformational changes in the ribosome. The chain is Elongation factor 2 (EFT1) from Candida glabrata (strain ATCC 2001 / BCRC 20586 / JCM 3761 / NBRC 0622 / NRRL Y-65 / CBS 138) (Yeast).